A 382-amino-acid polypeptide reads, in one-letter code: MDSRPTIAEVDLAALRHNYDLVVRTIPRGCGILAVVKADAYGHGFMDIARELETLGVTAFGVAFLAEGIQLRKSGIDRPVLILGGVYPGQERKCVGFNLSTALFSLEQARVLDDAAGRLYRRARVHAKIDTGMGRLGIPHEEASAFFSALRELKHLDLEGIISHFASADELDEDGRRYSDLQASRFAAAVAAARHEGFEPRYVHIANSAAAFGMDLPFCNLVRPGIVLYGALPSGDFEGKMALKPIMRLRSSIAMLKWVEPGTSISYARRFTAPDRRLVASIPVGYADGYSRSLTNRGEVVVRGRRAPVVGTVCMDWIMADVTHVSGVTVGDEVTLLGCDQEGNCVRAEELAEWAGTIPYEIFCGISKRVPRVYLNPSIRHR.

Residue Lys37 is the Proton acceptor; specific for D-alanine of the active site. At Lys37 the chain carries N6-(pyridoxal phosphate)lysine. Arg135 contributes to the substrate binding site. Tyr267 serves as the catalytic Proton acceptor; specific for L-alanine. Residue Met315 coordinates substrate.

The protein belongs to the alanine racemase family. Pyridoxal 5'-phosphate serves as cofactor.

The catalysed reaction is L-alanine = D-alanine. Its pathway is amino-acid biosynthesis; D-alanine biosynthesis; D-alanine from L-alanine: step 1/1. In terms of biological role, catalyzes the interconversion of L-alanine and D-alanine. May also act on other amino acids. The sequence is that of Alanine racemase (alr) from Geobacter sulfurreducens (strain ATCC 51573 / DSM 12127 / PCA).